The sequence spans 921 residues: Isoleucine--tRNA ligase (921 aa).

Residues 57–67 (PYANGDIHMGH) carry the 'HIGH' region motif. An L-isoleucyl-5'-AMP-binding site is contributed by Glu-552. The 'KMSKS' region motif lies at 593–597 (KMSKS). Lys-596 is a binding site for ATP. Cys-888, Cys-891, Cys-908, and Cys-911 together coordinate Zn(2+).

Belongs to the class-I aminoacyl-tRNA synthetase family. IleS type 1 subfamily. As to quaternary structure, monomer. The cofactor is Zn(2+).

It is found in the cytoplasm. The enzyme catalyses tRNA(Ile) + L-isoleucine + ATP = L-isoleucyl-tRNA(Ile) + AMP + diphosphate. In terms of biological role, catalyzes the attachment of isoleucine to tRNA(Ile). As IleRS can inadvertently accommodate and process structurally similar amino acids such as valine, to avoid such errors it has two additional distinct tRNA(Ile)-dependent editing activities. One activity is designated as 'pretransfer' editing and involves the hydrolysis of activated Val-AMP. The other activity is designated 'posttransfer' editing and involves deacylation of mischarged Val-tRNA(Ile). This is Isoleucine--tRNA ligase from Bacillus anthracis (strain A0248).